Reading from the N-terminus, the 143-residue chain is Peptide methionine sulfoxide reductase MsrB (143 aa).

In terms of domain architecture, MsrB spans 16 to 139 (DAELRRRLTP…NSAALNFEAK (124 aa)). 4 residues coordinate Zn(2+): Cys-55, Cys-58, Cys-104, and Cys-107. Cys-128 (nucleophile) is an active-site residue.

It belongs to the MsrB Met sulfoxide reductase family. Requires Zn(2+) as cofactor.

It carries out the reaction L-methionyl-[protein] + [thioredoxin]-disulfide + H2O = L-methionyl-(R)-S-oxide-[protein] + [thioredoxin]-dithiol. The protein is Peptide methionine sulfoxide reductase MsrB of Burkholderia pseudomallei (strain 1710b).